A 335-amino-acid chain; its full sequence is L-lactate dehydrogenase B chain (335 aa).

NAD(+)-binding positions include 29–57 (GQVG…VEDK) and R99. Residues R106, N138, and R169 each contribute to the substrate site. N138 provides a ligand contact to NAD(+). Residue H193 is the Proton acceptor of the active site. Substrate is bound at residue T248.

This sequence belongs to the LDH/MDH superfamily. LDH family. In terms of assembly, homotetramer.

Its subcellular location is the cytoplasm. The enzyme catalyses (S)-lactate + NAD(+) = pyruvate + NADH + H(+). The protein operates within fermentation; pyruvate fermentation to lactate; (S)-lactate from pyruvate: step 1/1. Interconverts simultaneously and stereospecifically pyruvate and lactate with concomitant interconversion of NADH and NAD(+). The polypeptide is L-lactate dehydrogenase B chain (LDHB) (Sceloporus undulatus (Eastern fence lizard)).